The primary structure comprises 249 residues: Type III pantothenate kinase (249 aa).

Position 6–13 (6–13) interacts with ATP; it reads DIGNSRTK. Substrate-binding positions include Tyr89 and 96–99; that span reads GIDR. The Proton acceptor role is filled by Asp98. Asp119 contacts K(+). Thr122 provides a ligand contact to ATP. Position 174 (Thr174) interacts with substrate.

The protein belongs to the type III pantothenate kinase family. Homodimer. It depends on NH4(+) as a cofactor. K(+) is required as a cofactor.

The protein localises to the cytoplasm. It catalyses the reaction (R)-pantothenate + ATP = (R)-4'-phosphopantothenate + ADP + H(+). The protein operates within cofactor biosynthesis; coenzyme A biosynthesis; CoA from (R)-pantothenate: step 1/5. Its function is as follows. Catalyzes the phosphorylation of pantothenate (Pan), the first step in CoA biosynthesis. This chain is Type III pantothenate kinase, found in Colwellia psychrerythraea (strain 34H / ATCC BAA-681) (Vibrio psychroerythus).